Here is a 659-residue protein sequence, read N- to C-terminus: Heparin-sulfate lyase (659 aa).

The N-terminal stretch at 1-24 is a signal peptide; the sequence is MTTKIFKRIIVFAVIALSSGNILA. Residue Tyr294 is the Proton acceptor of the active site.

It belongs to the polysaccharide lyase 12 family.

It localises to the periplasm. It catalyses the reaction Elimination of sulfate, appears to act on linkages between N-acetyl-D-glucosamine and uronate. Product is an unsaturated sugar.. Its function is as follows. Specifically cleaves heparan sulfate-rich regions of acidic polysaccharides. Does not act on N,O-desulfated glucosamine or N-acetyl-O-sulfated glucosamine linkages. Functions in cleaving metazoan heparan sulfate and providing carbon, nitrogen and sulfate sources for microorganisms. The polypeptide is Heparin-sulfate lyase (hepC) (Pedobacter heparinus (strain ATCC 13125 / DSM 2366 / CIP 104194 / JCM 7457 / NBRC 12017 / NCIMB 9290 / NRRL B-14731 / HIM 762-3)).